The following is a 618-amino-acid chain: Elongation factor 4 (618 aa).

A tr-type G domain is found at 17–198 (AIIRNFCIIA…KIVRDLPAPE (182 aa)). Residues 29 to 34 (DHGKST) and 145 to 148 (NKID) contribute to the GTP site.

It belongs to the TRAFAC class translation factor GTPase superfamily. Classic translation factor GTPase family. LepA subfamily.

Its subcellular location is the cell membrane. It carries out the reaction GTP + H2O = GDP + phosphate + H(+). Functionally, required for accurate and efficient protein synthesis under certain stress conditions. May act as a fidelity factor of the translation reaction, by catalyzing a one-codon backward translocation of tRNAs on improperly translocated ribosomes. Back-translocation proceeds from a post-translocation (POST) complex to a pre-translocation (PRE) complex, thus giving elongation factor G a second chance to translocate the tRNAs correctly. Binds to ribosomes in a GTP-dependent manner. The polypeptide is Elongation factor 4 (Pseudarthrobacter chlorophenolicus (strain ATCC 700700 / DSM 12829 / CIP 107037 / JCM 12360 / KCTC 9906 / NCIMB 13794 / A6) (Arthrobacter chlorophenolicus)).